The primary structure comprises 171 residues: Putative phosphoesterase ABC1741 (171 aa).

His-34 serves as the catalytic Proton donor. 2 short sequence motifs (HXTX) span residues 34-37 and 116-119; these read HITL and HITI. The Proton acceptor role is filled by His-116.

It belongs to the 2H phosphoesterase superfamily. YjcG family.

The chain is Putative phosphoesterase ABC1741 from Shouchella clausii (strain KSM-K16) (Alkalihalobacillus clausii).